We begin with the raw amino-acid sequence, 415 residues long: Acetate kinase (415 aa).

Asparagine 8 contacts Mg(2+). Position 15 (lysine 15) interacts with ATP. A substrate-binding site is contributed by arginine 106. The Proton donor/acceptor role is filled by aspartate 163. ATP is bound by residues 222–226, 296–298, and 344–348; these read HLGNG, DLR, and GIGEN. Glutamate 397 serves as a coordination point for Mg(2+).

It belongs to the acetokinase family. Homodimer. The cofactor is Mg(2+). It depends on Mn(2+) as a cofactor.

The protein resides in the cytoplasm. The catalysed reaction is acetate + ATP = acetyl phosphate + ADP. Its pathway is metabolic intermediate biosynthesis; acetyl-CoA biosynthesis; acetyl-CoA from acetate: step 1/2. In terms of biological role, catalyzes the formation of acetyl phosphate from acetate and ATP. Can also catalyze the reverse reaction. In Thermosynechococcus vestitus (strain NIES-2133 / IAM M-273 / BP-1), this protein is Acetate kinase.